A 429-amino-acid polypeptide reads, in one-letter code: Ribosomal RNA small subunit methyltransferase B (429 aa).

Residues 254 to 260 (CAAPGGK), Asp277, Asp303, and Asp322 contribute to the S-adenosyl-L-methionine site. Cys375 acts as the Nucleophile in catalysis.

This sequence belongs to the class I-like SAM-binding methyltransferase superfamily. RsmB/NOP family.

The protein localises to the cytoplasm. The catalysed reaction is cytidine(967) in 16S rRNA + S-adenosyl-L-methionine = 5-methylcytidine(967) in 16S rRNA + S-adenosyl-L-homocysteine + H(+). Functionally, specifically methylates the cytosine at position 967 (m5C967) of 16S rRNA. The sequence is that of Ribosomal RNA small subunit methyltransferase B from Escherichia coli O17:K52:H18 (strain UMN026 / ExPEC).